A 295-amino-acid chain; its full sequence is Craniofacial development protein 1 (295 aa).

2 stretches are compositionally biased toward acidic residues: residues 1–18 (MEEF…DEDY) and 25–43 (YSED…DGEE). 2 disordered regions span residues 1-153 (MEEF…LDKP) and 188-217 (FLKQ…IKRA). A compositionally biased stretch (basic residues) spans 49 to 65 (KGKRRKAQGIPARKRKQ). 4 positions are modified to phosphoserine: Ser-80, Ser-83, Ser-84, and Ser-112. Residue Lys-146 forms a Glycyl lysine isopeptide (Lys-Gly) (interchain with G-Cter in SUMO2) linkage. Positions 174-213 (VTKEVDAASKEAKSFLKQTEREKPQALVTSPATPLPAGSG) are hydrophilic. Positions 188–197 (FLKQTEREKP) are enriched in basic and acidic residues. Ser-212 bears the Phosphoserine mark. Residues 214–295 (IKRASGMSSL…RDLRLSKMKP (82 aa)) enclose the BCNT-C domain. Lys-215 is modified (N6-methyllysine). Ser-246 carries the post-translational modification Phosphoserine.

As to expression, expressed in lung, liver and heart, with higher expression in teeth.

It localises to the chromosome. Its subcellular location is the centromere. It is found in the kinetochore. Its function is as follows. May play a role during embryogenesis. May modulate tooth organogenesis since alterations of this protein function affect tooth organs size as well as individual cell fate and survival. In embryonic cells, blockage of the function results in increased number of apoptotic cells, reduced proliferation, alterations in cell shape and fibronection matrix synthesis. The sequence is that of Craniofacial development protein 1 (Cfdp1) from Mus musculus (Mouse).